The chain runs to 22 residues: Mu-conotoxin SxIIIC (22 aa).

3 disulfides stabilise this stretch: Cys-3–Cys-15, Cys-4–Cys-21, and Cys-10–Cys-22. Cys-22 bears the Cysteine amide mark.

This sequence belongs to the conotoxin M superfamily. As to expression, expressed by the venom duct.

It is found in the secreted. In terms of biological role, mu-conotoxins block voltage-gated sodium channels (Nav). This toxin potently inhibits hNav1.4/SCN4A (IC(50)=15.11 nM). It also displays lower activities on other human subtypes (Nav1.1/SCN1A; IC(50)=132 nM, Nav1.2/SCN2A; IC(50)=363.8, Nav1.3/SCN3A; IC(50)=89.4, Nav1.6/SCN3A; IC(50)=124.9, Nav1.7/SCN7A; IC(50)=152.2). At Nav1.7/SCN9A, it does not elicit change in channel voltage-dependence of fast inactivation or activation, suggesting it acts as a pore blocker. Interestingly, it blocks current inhibition in an irreversible manner (tested during 35 minutes). The protein is Mu-conotoxin SxIIIC of Conus striolatus (Cone snail).